The following is a 389-amino-acid chain: Phospho-N-acetylmuramoyl-pentapeptide-transferase (389 aa).

A run of 10 helical transmembrane segments spans residues 21–41 (FITF…LFFG), 70–90 (GTPT…TLLW), 97–117 (FVWV…VDDY), 134–154 (YMWQ…SVSA), 189–209 (TISY…VIVG), 222–242 (GLAI…AYLT), 259–279 (AGEL…FLWF), 286–306 (VFMG…IAVI), 311–331 (IVLF…MIQV), and 366–386 (QVVV…LSTL).

The protein belongs to the glycosyltransferase 4 family. MraY subfamily. Mg(2+) serves as cofactor.

Its subcellular location is the cell inner membrane. It catalyses the reaction UDP-N-acetyl-alpha-D-muramoyl-L-alanyl-gamma-D-glutamyl-meso-2,6-diaminopimeloyl-D-alanyl-D-alanine + di-trans,octa-cis-undecaprenyl phosphate = di-trans,octa-cis-undecaprenyl diphospho-N-acetyl-alpha-D-muramoyl-L-alanyl-D-glutamyl-meso-2,6-diaminopimeloyl-D-alanyl-D-alanine + UMP. Its pathway is cell wall biogenesis; peptidoglycan biosynthesis. Its function is as follows. Catalyzes the initial step of the lipid cycle reactions in the biosynthesis of the cell wall peptidoglycan: transfers peptidoglycan precursor phospho-MurNAc-pentapeptide from UDP-MurNAc-pentapeptide onto the lipid carrier undecaprenyl phosphate, yielding undecaprenyl-pyrophosphoryl-MurNAc-pentapeptide, known as lipid I. The chain is Phospho-N-acetylmuramoyl-pentapeptide-transferase from Herminiimonas arsenicoxydans.